We begin with the raw amino-acid sequence, 98 residues long: Large ribosomal subunit protein uL23 (98 aa).

It belongs to the universal ribosomal protein uL23 family. Part of the 50S ribosomal subunit. Contacts protein L29, and trigger factor when it is bound to the ribosome.

Functionally, one of the early assembly proteins it binds 23S rRNA. One of the proteins that surrounds the polypeptide exit tunnel on the outside of the ribosome. Forms the main docking site for trigger factor binding to the ribosome. This chain is Large ribosomal subunit protein uL23, found in Teredinibacter turnerae (strain ATCC 39867 / T7901).